We begin with the raw amino-acid sequence, 146 residues long: Snaclec coagulation factor IX/factor X-binding protein subunit B (146 aa).

An N-terminal signal peptide occupies residues 1 to 23 (MGRFIFMSFGFLVVFLSLSGTAA). The 123-residue stretch at 24-146 (DCPSDWSSYE…MAQFVCEFQA (123 aa)) folds into the C-type lectin domain. 3 disulfides stabilise this stretch: cysteine 25–cysteine 36, cysteine 53–cysteine 142, and cysteine 119–cysteine 134. Ca(2+) contacts are provided by serine 64, glutamine 66, and glutamate 70. Residue glutamate 143 participates in Ca(2+) binding.

Belongs to the snaclec family. In terms of assembly, heterodimer with subunit A of IX/X-bp or IX-bp; disulfide-linked. In terms of tissue distribution, expressed by the venom gland.

It localises to the secreted. In terms of biological role, when linked to subunit A of IX/X-bp, anticoagulant protein which binds to the gamma-carboxyglutamic acid-domain regions of factors IX (F9) and factor X (10) in the presence of calcium with a 1 to 1 stoichiometry. Its function is as follows. When linked to subunit A of IX-bp, anticoagulant protein which binds to the gamma-carboxyglutamic acid-domain regions of factor IX (but not to factor X) in the presence of calcium with a 1 to 1 stoichiometry. The protein is Snaclec coagulation factor IX/factor X-binding protein subunit B of Protobothrops flavoviridis (Habu).